Consider the following 148-residue polypeptide: Large ribosomal subunit protein uL15 (148 aa).

Positions 1–46 (MITIEDLKPTPGSNKKYKRLGRGQGSGKGKTAGKGHKGQKSRGTGK) are disordered. The span at 31–45 (TAGKGHKGQKSRGTG) shows a compositional bias: basic residues.

Belongs to the universal ribosomal protein uL15 family. Part of the 50S ribosomal subunit.

Functionally, binds to the 23S rRNA. This Fervidobacterium nodosum (strain ATCC 35602 / DSM 5306 / Rt17-B1) protein is Large ribosomal subunit protein uL15.